A 310-amino-acid polypeptide reads, in one-letter code: Homoserine kinase (310 aa).

91–101 (PIGSGLGSSAC) contacts ATP.

Belongs to the GHMP kinase family. Homoserine kinase subfamily.

Its subcellular location is the cytoplasm. It catalyses the reaction L-homoserine + ATP = O-phospho-L-homoserine + ADP + H(+). Its pathway is amino-acid biosynthesis; L-threonine biosynthesis; L-threonine from L-aspartate: step 4/5. In terms of biological role, catalyzes the ATP-dependent phosphorylation of L-homoserine to L-homoserine phosphate. This Escherichia coli O6:K15:H31 (strain 536 / UPEC) protein is Homoserine kinase.